A 166-amino-acid polypeptide reads, in one-letter code: Lipoprotein signal peptidase (166 aa).

The next 4 membrane-spanning stretches (helical) occupy residues 10 to 30 (GGAL…DQLT), 32 to 52 (IAVL…FFNL), 71 to 91 (WQRW…CYLL), and 100 to 120 (FSLS…DRLI). Active-site residues include Asp126 and Asp144. The chain crosses the membrane as a helical span at residues 135–155 (WHWPAFNLADSAITVGAVLLI).

It belongs to the peptidase A8 family.

The protein resides in the cell inner membrane. It catalyses the reaction Release of signal peptides from bacterial membrane prolipoproteins. Hydrolyzes -Xaa-Yaa-Zaa-|-(S,diacylglyceryl)Cys-, in which Xaa is hydrophobic (preferably Leu), and Yaa (Ala or Ser) and Zaa (Gly or Ala) have small, neutral side chains.. Its pathway is protein modification; lipoprotein biosynthesis (signal peptide cleavage). In terms of biological role, this protein specifically catalyzes the removal of signal peptides from prolipoproteins. This is Lipoprotein signal peptidase from Burkholderia mallei (strain ATCC 23344).